Here is a 217-residue protein sequence, read N- to C-terminus: Serine acetyltransferase (217 aa).

This sequence belongs to the transferase hexapeptide repeat family.

The protein localises to the cytoplasm. The catalysed reaction is L-serine + acetyl-CoA = O-acetyl-L-serine + CoA. Its pathway is amino-acid biosynthesis; L-cysteine biosynthesis; L-cysteine from L-serine: step 1/2. With respect to regulation, inhibited by cysteine. Its function is as follows. Catalyzes the acetylation of serine by acetyl-CoA to produce O-acetylserine (OAS). This chain is Serine acetyltransferase, found in Bacillus pumilus (strain SAFR-032).